A 377-amino-acid chain; its full sequence is Gap junction gamma-1 protein (377 aa).

At 1-18 the chain is on the cytoplasmic side; sequence MSWSFLTRLLEEINNHST. The helical transmembrane segment at 19–39 threads the bilayer; sequence FVGKIWLTVLIIFRIVLTAVG. Residues 40 to 75 are Extracellular-facing; sequence GESIYYDEQSKFTCNTHQPGCENVCYDAFAPLSHVR. A helical transmembrane segment spans residues 76–96; it reads FWVFQIILITTPSIMYLGFAM. The Cytoplasmic portion of the chain corresponds to 97–174; the sequence is HRIARQPDEQ…RRIKQDGLMK (78 aa). Residues 129–163 are disordered; it reads DYEEAEDNQEEDPMICEEEEPEKDSEKGDKKKHDG. Residues 131-151 show a composition bias toward acidic residues; the sequence is EEAEDNQEEDPMICEEEEPEK. A helical membrane pass occupies residues 175-197; sequence VYVLQLLFRSVFEVGFLMGQYVL. Over 198–228 the chain is Extracellular; that stretch reads YGFEVIPFFVCSRNPCPHTVDCFVSRPTEKT. Residues 229-249 form a helical membrane-spanning segment; the sequence is IFLLIMYAVSALCLFLNLCEL. Residues 250 to 377 lie on the Cytoplasmic side of the membrane; that stretch reads FHLGIGGIRD…GVGSREKSGL (128 aa). 2 disordered regions span residues 266-286 and 341-377; these read KEIQ…HSVL and AHAS…KSGL. Residues 344-362 are compositionally biased toward polar residues; it reads SRSSSPEANSIAAEQNRLN.

It belongs to the connexin family. Gamma-type subfamily. As to quaternary structure, a connexon is composed of a hexamer of connexins.

It localises to the cell membrane. The protein localises to the cell junction. It is found in the gap junction. Its function is as follows. One gap junction consists of a cluster of closely packed pairs of transmembrane channels, the connexons, through which materials of low MW diffuse from one cell to a neighboring cell. In Xenopus laevis (African clawed frog), this protein is Gap junction gamma-1 protein (gjc1).